We begin with the raw amino-acid sequence, 130 residues long: S-adenosylmethionine decarboxylase proenzyme (130 aa).

Serine 66 serves as the catalytic Schiff-base intermediate with substrate; via pyruvic acid. At serine 66 the chain carries Pyruvic acid (Ser); by autocatalysis. Catalysis depends on histidine 71, which acts as the Proton acceptor; for processing activity. Cysteine 86 serves as the catalytic Proton donor; for catalytic activity.

It belongs to the prokaryotic AdoMetDC family. Type 1 subfamily. Heterotetramer of two alpha and two beta chains arranged as a dimer of alpha/beta heterodimers. The cofactor is pyruvate. Is synthesized initially as an inactive proenzyme. Formation of the active enzyme involves a self-maturation process in which the active site pyruvoyl group is generated from an internal serine residue via an autocatalytic post-translational modification. Two non-identical subunits are generated from the proenzyme in this reaction, and the pyruvate is formed at the N-terminus of the alpha chain, which is derived from the carboxyl end of the proenzyme. The post-translation cleavage follows an unusual pathway, termed non-hydrolytic serinolysis, in which the side chain hydroxyl group of the serine supplies its oxygen atom to form the C-terminus of the beta chain, while the remainder of the serine residue undergoes an oxidative deamination to produce ammonia and the pyruvoyl group blocking the N-terminus of the alpha chain.

The catalysed reaction is S-adenosyl-L-methionine + H(+) = S-adenosyl 3-(methylsulfanyl)propylamine + CO2. It participates in amine and polyamine biosynthesis; S-adenosylmethioninamine biosynthesis; S-adenosylmethioninamine from S-adenosyl-L-methionine: step 1/1. Functionally, catalyzes the decarboxylation of S-adenosylmethionine to S-adenosylmethioninamine (dcAdoMet), the propylamine donor required for the synthesis of the polyamines spermine and spermidine from the diamine putrescine. This is S-adenosylmethionine decarboxylase proenzyme from Bacillus cereus (strain ATCC 10987 / NRS 248).